The following is a 133-amino-acid chain: Putative N-acetylgalactosamine permease IIC component 2 (133 aa).

The Cytoplasmic portion of the chain corresponds to 1–2; the sequence is ME. Residues 1–133 form the PTS EIIC type-4 domain; that stretch reads MEISLLQAFA…CDLATNPRRI (133 aa). A helical membrane pass occupies residues 3 to 23; the sequence is ISLLQAFALGIIAFIAGLDMF. Residues 24 to 32 are Periplasmic-facing; the sequence is NGLTHMHRP. Residues 33 to 53 form a helical membrane-spanning segment; the sequence is VVLGPLVGLVLGDLHTGILTG. Over 54 to 65 the chain is Cytoplasmic; it reads GTLELVWMGLAP. The chain crosses the membrane as a helical span at residues 66–86; sequence LAGAQPPNVIIGTIVGTAFAI. At 87–93 the chain is on the periplasmic side; the sequence is TTGVKPD. The helical transmembrane segment at 94-114 threads the bilayer; that stretch reads VAVGVAVPFAVAVQMGITFLF. Over 115–133 the chain is Cytoplasmic; that stretch reads SVMSGVMSRCDLATNPRRI.

The protein localises to the cell inner membrane. In terms of biological role, the phosphoenolpyruvate-dependent sugar phosphotransferase system (PTS), a major carbohydrate active -transport system, catalyzes the phosphorylation of incoming sugar substrates concomitant with their translocation across the cell membrane. This system is involved in N-acetylgalactosamine transport. The polypeptide is Putative N-acetylgalactosamine permease IIC component 2 (agaW) (Escherichia coli (strain K12)).